The primary structure comprises 190 residues: uncharacterized protein (190 aa).

Residues Met-1–Val-21 form a helical membrane-spanning segment. The span at Arg-103–Ser-114 shows a compositional bias: basic and acidic residues. The tract at residues Arg-103–Lys-130 is disordered.

The protein to B.burgdorferi BB0265.

It is found in the membrane. This is an uncharacterized protein from Treponema pallidum (strain Nichols).